Reading from the N-terminus, the 187-residue chain is UPF0301 protein YqgE (187 aa).

Belongs to the UPF0301 (AlgH) family.

This is UPF0301 protein YqgE from Escherichia coli O7:K1 (strain IAI39 / ExPEC).